A 135-amino-acid polypeptide reads, in one-letter code: Photosystem II extrinsic protein U (135 aa).

The signal sequence occupies residues 1 to 29; the sequence is MKRLLSWLTGALLMAGLLAGLILPGSVHA.

Belongs to the PsbU family. In terms of assembly, PSII is composed of 1 copy each of membrane proteins PsbA, PsbB, PsbC, PsbD, PsbE, PsbF, PsbH, PsbI, PsbJ, PsbK, PsbL, PsbM, PsbT, PsbX, PsbY, Psb30/Ycf12, peripheral proteins PsbO, CyanoQ (PsbQ), PsbU, PsbV and a large number of cofactors. It forms dimeric complexes.

It localises to the cellular thylakoid membrane. Its function is as follows. One of the extrinsic, lumenal subunits of photosystem II (PSII). PSII is a light-driven water plastoquinone oxidoreductase, using light energy to abstract electrons from H(2)O, generating a proton gradient subsequently used for ATP formation. The extrinsic proteins stabilize the structure of photosystem II oxygen-evolving complex (OEC), the ion environment of oxygen evolution and protect the OEC against heat-induced inactivation. The protein is Photosystem II extrinsic protein U of Parasynechococcus marenigrum (strain WH8102).